The primary structure comprises 664 residues: Glycine--tRNA ligase beta subunit (664 aa).

This sequence belongs to the class-II aminoacyl-tRNA synthetase family. Tetramer of two alpha and two beta subunits.

It is found in the cytoplasm. The catalysed reaction is tRNA(Gly) + glycine + ATP = glycyl-tRNA(Gly) + AMP + diphosphate. This chain is Glycine--tRNA ligase beta subunit, found in Rickettsia peacockii (strain Rustic).